A 389-amino-acid polypeptide reads, in one-letter code: S-adenosylmethionine synthase (389 aa).

Histidine 17 lines the ATP pocket. Position 19 (aspartate 19) interacts with Mg(2+). A K(+)-binding site is contributed by glutamate 45. Residues glutamate 58 and glutamine 101 each contribute to the L-methionine site. Positions 101–111 (QSPDIAQGVNP) are flexible loop. Residues 168–170 (DGK), 234–235 (RF), aspartate 243, 249–250 (RK), and lysine 270 contribute to the ATP site. Aspartate 243 contacts L-methionine. L-methionine is bound at residue lysine 274.

It belongs to the AdoMet synthase family. As to quaternary structure, homotetramer; dimer of dimers. Requires Mg(2+) as cofactor. K(+) serves as cofactor.

Its subcellular location is the cytoplasm. The enzyme catalyses L-methionine + ATP + H2O = S-adenosyl-L-methionine + phosphate + diphosphate. It functions in the pathway amino-acid biosynthesis; S-adenosyl-L-methionine biosynthesis; S-adenosyl-L-methionine from L-methionine: step 1/1. Functionally, catalyzes the formation of S-adenosylmethionine (AdoMet) from methionine and ATP. The overall synthetic reaction is composed of two sequential steps, AdoMet formation and the subsequent tripolyphosphate hydrolysis which occurs prior to release of AdoMet from the enzyme. This Syntrophobacter fumaroxidans (strain DSM 10017 / MPOB) protein is S-adenosylmethionine synthase.